Consider the following 209-residue polypeptide: Uracil phosphoribosyltransferase (209 aa).

Residues arginine 79, arginine 104, and aspartate 131–serine 139 contribute to the 5-phospho-alpha-D-ribose 1-diphosphate site. Uracil-binding positions include isoleucine 194 and glycine 199–alanine 201. Aspartate 200 is a binding site for 5-phospho-alpha-D-ribose 1-diphosphate.

This sequence belongs to the UPRTase family. The cofactor is Mg(2+).

It carries out the reaction UMP + diphosphate = 5-phospho-alpha-D-ribose 1-diphosphate + uracil. It functions in the pathway pyrimidine metabolism; UMP biosynthesis via salvage pathway; UMP from uracil: step 1/1. Its activity is regulated as follows. Allosterically activated by GTP. Its function is as follows. Catalyzes the conversion of uracil and 5-phospho-alpha-D-ribose 1-diphosphate (PRPP) to UMP and diphosphate. The protein is Uracil phosphoribosyltransferase of Streptococcus pyogenes serotype M1.